Consider the following 335-residue polypeptide: Ketol-acid reductoisomerase (NAD(P)(+)) (335 aa).

The KARI N-terminal Rossmann domain maps to 2–182 (AKIYKDEDIS…GCARAGVIES (181 aa)). Residues 25 to 28 (YGSQ), arginine 49, serine 53, and 83 to 86 (DMVQ) contribute to the NADP(+) site. Histidine 108 is a catalytic residue. Glycine 134 lines the NADP(+) pocket. The region spanning 183–328 (TFKEETETDL…RKLREMMFRG (146 aa)) is the KARI C-terminal knotted domain. Mg(2+)-binding residues include aspartate 191, glutamate 195, glutamate 227, and glutamate 231. Serine 252 is a binding site for substrate.

This sequence belongs to the ketol-acid reductoisomerase family. In terms of assembly, homodimer. Mg(2+) is required as a cofactor.

It carries out the reaction (2R)-2,3-dihydroxy-3-methylbutanoate + NAD(+) = (2S)-2-acetolactate + NADH + H(+). The enzyme catalyses (2R)-2,3-dihydroxy-3-methylbutanoate + NADP(+) = (2S)-2-acetolactate + NADPH + H(+). It participates in amino-acid biosynthesis; L-isoleucine biosynthesis; L-isoleucine from 2-oxobutanoate: step 2/4. The protein operates within amino-acid biosynthesis; L-valine biosynthesis; L-valine from pyruvate: step 2/4. In terms of biological role, involved in the biosynthesis of branched-chain amino acids (BCAA). Catalyzes an alkyl-migration followed by a ketol-acid reduction of (S)-2-acetolactate (S2AL) to yield (R)-2,3-dihydroxy-isovalerate. In the isomerase reaction, S2AL is rearranged via a Mg-dependent methyl migration to produce 3-hydroxy-3-methyl-2-ketobutyrate (HMKB). In the reductase reaction, this 2-ketoacid undergoes a metal-dependent reduction by NADPH or NADH to yield (R)-2,3-dihydroxy-isovalerate. The chain is Ketol-acid reductoisomerase (NAD(P)(+)) from Ignisphaera aggregans (strain DSM 17230 / JCM 13409 / AQ1.S1).